Here is a 147-residue protein sequence, read N- to C-terminus: Ribosome-binding factor A (147 aa).

Positions 126–147 are disordered; it reads LKKNAQPAGDAHPYKDDDAMND. Over residues 137–147 the composition is skewed to basic and acidic residues; sequence HPYKDDDAMND.

The protein belongs to the RbfA family. Monomer. Binds 30S ribosomal subunits, but not 50S ribosomal subunits or 70S ribosomes.

It is found in the cytoplasm. Functionally, one of several proteins that assist in the late maturation steps of the functional core of the 30S ribosomal subunit. Associates with free 30S ribosomal subunits (but not with 30S subunits that are part of 70S ribosomes or polysomes). Required for efficient processing of 16S rRNA. May interact with the 5'-terminal helix region of 16S rRNA. This chain is Ribosome-binding factor A, found in Corynebacterium diphtheriae (strain ATCC 700971 / NCTC 13129 / Biotype gravis).